Reading from the N-terminus, the 465-residue chain is Monocarboxylate transporter 4 (465 aa).

Topologically, residues G2–D17 are cytoplasmic. The chain crosses the membrane as a helical span at residues G18–F38. The Extracellular segment spans residues P39–A61. A helical transmembrane segment spans residues W62–V82. Topologically, residues N83–R84 are cytoplasmic. The chain crosses the membrane as a helical span at residues F85–A105. Topologically, residues S106–R109 are extracellular. Residues S110–F130 traverse the membrane as a helical segment. The Cytoplasmic portion of the chain corresponds to Q131–N149. The chain crosses the membrane as a helical span at residues G150–L170. At Q171–G179 the chain is on the extracellular side. A helical transmembrane segment spans residues F180–L200. At V201–G227 the chain is on the cytoplasmic side. Residues F228 to F248 form a helical membrane-spanning segment. Residues V249–A264 are Extracellular-facing. A helical transmembrane segment spans residues F265–A285. The Cytoplasmic portion of the chain corresponds to G286–S294. Residues V295–A315 traverse the membrane as a helical segment. Over G316–D317 the chain is Extracellular. A helical membrane pass occupies residues Y318–L338. Topologically, residues Q339–K351 are cytoplasmic. The chain crosses the membrane as a helical span at residues F352–P372. Topologically, residues S373 to Y384 are extracellular. A helical transmembrane segment spans residues M385–G405. Topologically, residues N406 to V465 are cytoplasmic. The tract at residues P419–V438 is disordered. Basolateral sorting signal stretches follow at residues A423–R441 and R441–V465. The segment covering E425–V438 has biased composition (basic and acidic residues). Residue S436 is modified to Phosphoserine. T460 carries the phosphothreonine modification. S464 carries the post-translational modification Phosphoserine.

Belongs to the major facilitator superfamily. Monocarboxylate porter (TC 2.A.1.13) family. As to quaternary structure, interacts with BSG; interaction mediates SLC16A3 targeting to the plasma membrane. In terms of tissue distribution, highly expressed in skeletal muscle.

The protein resides in the cell membrane. It localises to the basolateral cell membrane. It carries out the reaction (S)-lactate(in) + H(+)(in) = (S)-lactate(out) + H(+)(out). The enzyme catalyses pyruvate(out) + H(+)(out) = pyruvate(in) + H(+)(in). In terms of biological role, proton-dependent transporter of monocarboxylates such as L-lactate and pyruvate. Plays a predominant role in L-lactate efflux from highly glycolytic cells. This is Monocarboxylate transporter 4 (SLC16A3) from Homo sapiens (Human).